Consider the following 239-residue polypeptide: Ribonuclease PH (239 aa).

Phosphate contacts are provided by residues arginine 86 and 124-126 (GTR).

This sequence belongs to the RNase PH family. As to quaternary structure, homohexameric ring arranged as a trimer of dimers.

It catalyses the reaction tRNA(n+1) + phosphate = tRNA(n) + a ribonucleoside 5'-diphosphate. Phosphorolytic 3'-5' exoribonuclease that plays an important role in tRNA 3'-end maturation. Removes nucleotide residues following the 3'-CCA terminus of tRNAs; can also add nucleotides to the ends of RNA molecules by using nucleoside diphosphates as substrates, but this may not be physiologically important. Probably plays a role in initiation of 16S rRNA degradation (leading to ribosome degradation) during starvation. In Anaeromyxobacter dehalogenans (strain 2CP-C), this protein is Ribonuclease PH.